The primary structure comprises 384 residues: L-lactate dehydrogenase (384 aa).

The 380-residue stretch at 1-380 (MIISSSNDYR…NESCLVEMNK (380 aa)) folds into the FMN hydroxy acid dehydrogenase domain. A substrate-binding site is contributed by tyrosine 24. Serine 106 and glutamine 127 together coordinate FMN. Tyrosine 129 is a substrate binding site. Residue threonine 155 coordinates FMN. Arginine 164 is a substrate binding site. Lysine 251 provides a ligand contact to FMN. The Proton acceptor role is filled by histidine 275. Arginine 278 contributes to the substrate binding site. 306–330 (DSGIRNGLDVVRMLALGADSVMLGR) is an FMN binding site.

It belongs to the FMN-dependent alpha-hydroxy acid dehydrogenase family. It depends on FMN as a cofactor.

The protein resides in the cell inner membrane. It catalyses the reaction (S)-lactate + A = pyruvate + AH2. Catalyzes the conversion of L-lactate to pyruvate. Is coupled to the respiratory chain. The polypeptide is L-lactate dehydrogenase (Acinetobacter baylyi (strain ATCC 33305 / BD413 / ADP1)).